The primary structure comprises 343 residues: Phosphate acyltransferase (343 aa).

It belongs to the PlsX family. Homodimer. Probably interacts with PlsY.

Its subcellular location is the cytoplasm. It carries out the reaction a fatty acyl-[ACP] + phosphate = an acyl phosphate + holo-[ACP]. Its pathway is lipid metabolism; phospholipid metabolism. Catalyzes the reversible formation of acyl-phosphate (acyl-PO(4)) from acyl-[acyl-carrier-protein] (acyl-ACP). This enzyme utilizes acyl-ACP as fatty acyl donor, but not acyl-CoA. This Limosilactobacillus reuteri (strain DSM 20016) (Lactobacillus reuteri) protein is Phosphate acyltransferase.